The sequence spans 400 residues: MSDIISIKDIDLAKKKVFIRCDFNVPQDDFLNITDDRRIRSAIPTIRYCLDNGCSVILASHLGRPKEISSKYSLEPVAKRLARLLDKEIVMAKDVIGEDAKTKAMNLKVGEILLLENLRFEKGETKNDENLAKELASMVQVYINDAFGVCHRAHSSVEAITKFFDEKHKGAGFLLQKEIDFASNLIKHPARPFVAVVGGSKVSGKLQALTNLLPKVDKLIIGGGMAFTFLKALGYDIGNSLLEEELLEEANKILTKGKNLGVKIYLPVDVVAAPACSQDVPMKFVPAQEIPNGWMGLDIGPASVRLFKEVISDAQTIWWNGPMGVFEIDKFSKGSIKMSHYISEGHATSVVGGGDTADVVARAGDADEMTFISTGGGASLELIEGKELPGVKALRSKENE.

Residues Asp-22–Asn-24, Arg-38, His-61–Arg-64, Arg-119, and Arg-152 contribute to the substrate site. Residues Lys-205, Gly-296, Glu-327, and Gly-353–Thr-356 each bind ATP.

This sequence belongs to the phosphoglycerate kinase family. As to quaternary structure, monomer.

The protein resides in the cytoplasm. The enzyme catalyses (2R)-3-phosphoglycerate + ATP = (2R)-3-phospho-glyceroyl phosphate + ADP. Its pathway is carbohydrate degradation; glycolysis; pyruvate from D-glyceraldehyde 3-phosphate: step 2/5. This chain is Phosphoglycerate kinase, found in Campylobacter jejuni subsp. jejuni serotype O:23/36 (strain 81-176).